Here is a 240-residue protein sequence, read N- to C-terminus: Small ribosomal subunit protein uS2c (240 aa).

The protein belongs to the universal ribosomal protein uS2 family.

The protein resides in the plastid. Its subcellular location is the chloroplast. This Cycas taitungensis (Prince sago) protein is Small ribosomal subunit protein uS2c (rps2).